Reading from the N-terminus, the 428-residue chain is Histidinol dehydrogenase (428 aa).

Residues Tyr129, Gln188, and Asn211 each coordinate NAD(+). Residues Ser234, Gln256, and His259 each coordinate substrate. Residues Gln256 and His259 each coordinate Zn(2+). Residues Glu323 and His324 each act as proton acceptor in the active site. Residues His324, Asp357, Glu411, and His416 each contribute to the substrate site. Residue Asp357 participates in Zn(2+) binding. Residue His416 participates in Zn(2+) binding.

The protein belongs to the histidinol dehydrogenase family. Zn(2+) serves as cofactor.

It carries out the reaction L-histidinol + 2 NAD(+) + H2O = L-histidine + 2 NADH + 3 H(+). It functions in the pathway amino-acid biosynthesis; L-histidine biosynthesis; L-histidine from 5-phospho-alpha-D-ribose 1-diphosphate: step 9/9. In terms of biological role, catalyzes the sequential NAD-dependent oxidations of L-histidinol to L-histidinaldehyde and then to L-histidine. The chain is Histidinol dehydrogenase from Caulobacter vibrioides (strain ATCC 19089 / CIP 103742 / CB 15) (Caulobacter crescentus).